The chain runs to 369 residues: 3-dehydroquinate synthase (369 aa).

NAD(+) contacts are provided by residues D75–K80, G109–D113, T133–T134, K146, K155, and T173–T176. Residues E188, H251, and H268 each coordinate Zn(2+).

The protein belongs to the sugar phosphate cyclases superfamily. Dehydroquinate synthase family. Co(2+) serves as cofactor. The cofactor is Zn(2+). NAD(+) is required as a cofactor.

The protein resides in the cytoplasm. The enzyme catalyses 7-phospho-2-dehydro-3-deoxy-D-arabino-heptonate = 3-dehydroquinate + phosphate. The protein operates within metabolic intermediate biosynthesis; chorismate biosynthesis; chorismate from D-erythrose 4-phosphate and phosphoenolpyruvate: step 2/7. Its function is as follows. Catalyzes the conversion of 3-deoxy-D-arabino-heptulosonate 7-phosphate (DAHP) to dehydroquinate (DHQ). The chain is 3-dehydroquinate synthase from Legionella pneumophila (strain Paris).